The primary structure comprises 223 residues: Protein-L-isoaspartate O-methyltransferase (223 aa).

S70 is an active-site residue.

This sequence belongs to the methyltransferase superfamily. L-isoaspartyl/D-aspartyl protein methyltransferase family.

It is found in the cytoplasm. It catalyses the reaction [protein]-L-isoaspartate + S-adenosyl-L-methionine = [protein]-L-isoaspartate alpha-methyl ester + S-adenosyl-L-homocysteine. In terms of biological role, catalyzes the methyl esterification of L-isoaspartyl residues in peptides and proteins that result from spontaneous decomposition of normal L-aspartyl and L-asparaginyl residues. It plays a role in the repair and/or degradation of damaged proteins. The protein is Protein-L-isoaspartate O-methyltransferase of Saccharophagus degradans (strain 2-40 / ATCC 43961 / DSM 17024).